A 418-amino-acid polypeptide reads, in one-letter code: tRNA-2-methylthio-N(6)-dimethylallyladenosine synthase (418 aa).

Positions 2–118 constitute an MTTase N-terminal domain; it reads PGYYLWTIGC…WREIPEGFIL (117 aa). [4Fe-4S] cluster contacts are provided by Cys-11, Cys-47, Cys-81, Cys-134, Cys-138, and Cys-141. A Radical SAM core domain is found at 120-351; it reads LRPPVSANVT…EDLQKETVGK (232 aa). The TRAM domain occupies 346-414; the sequence is KETVGKANAA…PWSLQAKLVN (69 aa).

It belongs to the methylthiotransferase family. MiaB subfamily. Monomer. [4Fe-4S] cluster is required as a cofactor.

It is found in the cytoplasm. It carries out the reaction N(6)-dimethylallyladenosine(37) in tRNA + (sulfur carrier)-SH + AH2 + 2 S-adenosyl-L-methionine = 2-methylsulfanyl-N(6)-dimethylallyladenosine(37) in tRNA + (sulfur carrier)-H + 5'-deoxyadenosine + L-methionine + A + S-adenosyl-L-homocysteine + 2 H(+). In terms of biological role, catalyzes the methylthiolation of N6-(dimethylallyl)adenosine (i(6)A), leading to the formation of 2-methylthio-N6-(dimethylallyl)adenosine (ms(2)i(6)A) at position 37 in tRNAs that read codons beginning with uridine. This Dehalococcoides mccartyi (strain CBDB1) protein is tRNA-2-methylthio-N(6)-dimethylallyladenosine synthase.